A 101-amino-acid polypeptide reads, in one-letter code: Small ribosomal subunit protein uS14m (101 aa).

This sequence belongs to the universal ribosomal protein uS14 family. As to quaternary structure, component of the mitochondrial ribosome small subunit (28S) which comprises a 12S rRNA and about 30 distinct proteins. Interacts with LIAT1.

Its subcellular location is the mitochondrion. This chain is Small ribosomal subunit protein uS14m (mrps14), found in Dictyostelium citrinum (Slime mold).